A 1196-amino-acid polypeptide reads, in one-letter code: Nucleolar protein 6 (1196 aa).

Disordered regions lie at residues 1-74 (MPGK…NVKP) and 1140-1196 (KREQ…KALK). Basic and acidic residues-rich tracts occupy residues 22-31 (HAEDHSDLEH) and 65-74 (HRGDTKNVKP). The segment covering 1165-1187 (KPKKHGKRKGTGKAAPPKKKRLI) has biased composition (basic residues).

It belongs to the NRAP family. Part of the small subunit (SSU) processome, composed of more than 70 proteins and the RNA chaperone small nucleolar RNA (snoRNA) U3.

It is found in the nucleus. It localises to the nucleolus. The protein resides in the chromosome. In terms of biological role, part of the small subunit (SSU) processome, first precursor of the small eukaryotic ribosomal subunit. During the assembly of the SSU processome in the nucleolus, many ribosome biogenesis factors, an RNA chaperone and ribosomal proteins associate with the nascent pre-rRNA and work in concert to generate RNA folding, modifications, rearrangements and cleavage as well as targeted degradation of pre-ribosomal RNA by the RNA exosome. This chain is Nucleolar protein 6, found in Drosophila simulans (Fruit fly).